The following is a 698-amino-acid chain: Cytochrome c oxidase subunit 1 (698 aa).

Residues 65–85 (INYLYFSMVTGLSGAALATMI) traverse the membrane as a helical segment. A Ca(2+)-binding site is contributed by glutamate 88. Histidine 111 provides a ligand contact to Fe(II)-heme a. The next 8 helical transmembrane spans lie at 113 to 133 (LIMV…NFLI), 147 to 167 (LNSI…KIGF), 304 to 324 (ILIL…TNLL), 349 to 369 (IFLT…AVIM), 395 to 415 (LFWF…FGFI), 434 to 454 (IWAI…HMYL), 468 to 488 (ITIM…LSLV), and 498 to 518 (FLFS…GMWL). Histidine 401 is a Cu cation binding site. Residues 401–405 (HPEVY) constitute a cross-link (1'-histidyl-3'-tyrosine (His-Tyr)). Position 405 (tyrosine 405) interacts with O2. Positions 450 and 451 each coordinate Cu cation. The Mg(2+) site is built by histidine 528 and aspartate 529. The next 3 helical transmembrane spans lie at 533-553 (VVAH…FSGF), 574-594 (LIYY…LGFS), and 613-633 (MSTA…LMIF). Histidine 536 contacts heme a3. Histidine 538 serves as a coordination point for Fe(II)-heme a.

The protein belongs to the heme-copper respiratory oxidase family. In terms of assembly, component of the cytochrome c oxidase (complex IV, CIV), a multisubunit enzyme composed of a catalytic core of 3 subunits and several supernumerary subunits. The complex exists as a monomer or a dimer and forms supercomplexes (SCs) in the inner mitochondrial membrane with ubiquinol-cytochrome c oxidoreductase (cytochrome b-c1 complex, complex III, CIII). Requires heme as cofactor. It depends on Cu cation as a cofactor.

Its subcellular location is the mitochondrion inner membrane. The enzyme catalyses 4 Fe(II)-[cytochrome c] + O2 + 8 H(+)(in) = 4 Fe(III)-[cytochrome c] + 2 H2O + 4 H(+)(out). The protein operates within energy metabolism; oxidative phosphorylation. Its function is as follows. Component of the cytochrome c oxidase, the last enzyme in the mitochondrial electron transport chain which drives oxidative phosphorylation. The respiratory chain contains 3 multisubunit complexes succinate dehydrogenase (complex II, CII), ubiquinol-cytochrome c oxidoreductase (cytochrome b-c1 complex, complex III, CIII) and cytochrome c oxidase (complex IV, CIV), that cooperate to transfer electrons derived from NADH and succinate to molecular oxygen, creating an electrochemical gradient over the inner membrane that drives transmembrane transport and the ATP synthase. Cytochrome c oxidase is the component of the respiratory chain that catalyzes the reduction of oxygen to water. Electrons originating from reduced cytochrome c in the intermembrane space (IMS) are transferred via the dinuclear copper A center (CU(A)) of subunit 2 and heme A of subunit 1 to the active site in subunit 1, a binuclear center (BNC) formed by heme A3 and copper B (CU(B)). The BNC reduces molecular oxygen to 2 water molecules using 4 electrons from cytochrome c in the IMS and 4 protons from the mitochondrial matrix. This is Cytochrome c oxidase subunit 1 (COI) from Tetrahymena pyriformis.